A 619-amino-acid polypeptide reads, in one-letter code: MQLSEGLAAHGTRRAGKWKRTQVPLLGEECADMDLARKEFLLGNGLAAGKMNISIDLDTNYAELVLNVGRVTLGENNRRKMKDSQLRKQQNENVSRAVCALLNSGGGFIKAEVENEDYSYKKDGIGLDLENSFSNMLPFVPNFLDFMQNGNYFHIFVKSWSLETSGPQIATLSSSLYKRDVTSAKVMNASAALEFLKDMEKTGGRAYLRPESPAKRACVDVQEESNMEALAADFFNRTELNYKEKLTFTESTHVEIKNFATEKLLQRITEILPQYVSAFANTDGGYLFVGLNEDKEIIGFKAEKSYLTKLEEVTKNSIGKLPVHHFCVEKGTINYLCKSLGVYDKGRLCGYVYALRVERFCCAVFAKKPDSWHVKDNRVKQLTEKEWIQFMVDSESVCEELPSPASTSSPVSQSCPLCEYINFKIQPLRYHLPGLSEKITFAPKTLCRNLFSQHEGLKQLICEEMGSVSKGSLIFSRSWSLDLGLQENHKVLCDALLISQDKPPVLYTFHMVQDEEFKGYSTQTAQTLKQKLAKIGGYTKKVCVMTKIFYLSPEGKTSCQYDLNSQVIYPESYYWTTAQTMKDLEKALSNILPKENQIFLFVCLFRFCLFVCLFVFFLR.

The chain crosses the membrane as a helical span at residues 598–618 (IFLFVCLFRFCLFVCLFVFFL).

This sequence belongs to the Schlafen family.

Its subcellular location is the membrane. The polypeptide is Schlafen family member 12-like (SLFN12L) (Pongo abelii (Sumatran orangutan)).